The primary structure comprises 2195 residues: Genome polyprotein (2195 aa).

Glycine 2 carries N-myristoyl glycine; by host lipidation. Over 2 to 1505 the chain is Cytoplasmic; it reads GAQVSTQKTG…HVSRAFICLQ (1504 aa). Residues 567–583 form an amphipathic alpha-helix region; the sequence is LLQGDVVEAVENAVARV. Residues histidine 882 and aspartate 900 each act as for protease 2A activity in the active site. Cysteine 917 and cysteine 919 together coordinate Zn(2+). Cysteine 971 acts as the For protease 2A activity in catalysis. Residues cysteine 977 and histidine 979 each coordinate Zn(2+). Positions 1111–1183 are membrane-binding; it reads NNGWLKKFTE…EQSAPSQSDQ (73 aa). The segment at 1111–1249 is oligomerization; the sequence is NNGWLKKFTE…SPGAGKSVAT (139 aa). Residues 1132 to 1136 form an RNA-binding region; it reads SIKIQ. The 157-residue stretch at 1215–1371 folds into the SF3 helicase domain; the sequence is EKKMSNYIQF…SMYSQNGKIN (157 aa). Residues cysteine 1379, cysteine 1391, and cysteine 1396 each contribute to the Zn(2+) site. The C4-type; degenerate zinc finger occupies 1379–1396; sequence CDEECCPVNFKRCCPLVC. Positions 1423–1430 are RNA-binding; that stretch reads EYNHRHSV. Residues 1434–1439 form an oligomerization region; it reads LEALFQ. Residues 1506–1521 lie within the membrane without spanning it; the sequence is ALTTFVSVAGIIYIIY. The Cytoplasmic segment spans residues 1522 to 2195; it reads KLFAGFQGAY…TLRRKWLDSF (674 aa). An O-(5'-phospho-RNA)-tyrosine modification is found at tyrosine 1531. A Peptidase C3 domain is found at 1551–1729; the sequence is GPAFEFAVAM…FSAALLKHYF (179 aa). Residues histidine 1590, glutamate 1621, and cysteine 1697 each act as for protease 3C activity in the active site. The RdRp catalytic domain maps to 1960–2076; the sequence is GHLIAFDYSG…SYPWPIDASL (117 aa). Residues aspartate 1966 and aspartate 2062 each coordinate Mg(2+).

Belongs to the picornaviruses polyprotein family. As to quaternary structure, interacts with capsid protein VP1 and capsid protein VP3 to form heterotrimeric protomers. In terms of assembly, interacts with capsid protein VP0, and capsid protein VP3 to form heterotrimeric protomers. Five protomers subsequently associate to form pentamers which serve as building blocks for the capsid. Interacts with capsid protein VP2, capsid protein VP3 and capsid protein VP4 following cleavage of capsid protein VP0. Interacts with capsid protein VP1 and capsid protein VP3 in the mature capsid. As to quaternary structure, interacts with capsid protein VP0 and capsid protein VP1 to form heterotrimeric protomers. Five protomers subsequently associate to form pentamers which serve as building blocks for the capsid. Interacts with capsid protein VP4 in the mature capsid. Interacts with protein 2C; this interaction may be important for virion morphogenesis. In terms of assembly, interacts with capsid protein VP1 and capsid protein VP3. Homodimer. As to quaternary structure, homohexamer; forms a hexameric ring structure with 6-fold symmetry characteristic of AAA+ ATPases. Interacts (via N-terminus) with host RTN3 (via reticulon domain); this interaction is important for viral replication. Interacts with capsid protein VP3; this interaction may be important for virion morphogenesis. In terms of assembly, interacts with protein 3CD. Homodimer. Interacts with host GBF1. Interacts (via GOLD domain) with host ACBD3 (via GOLD domain); this interaction allows the formation of a viral protein 3A/ACBD3 heterotetramer with a 2:2 stoichiometry, which will stimulate the recruitment of host PI4KB in order to synthesize PI4P at the viral RNA replication sites. As to quaternary structure, interacts with RNA-directed RNA polymerase. In terms of assembly, interacts with protein 3AB and with RNA-directed RNA polymerase. Interacts with Viral protein genome-linked and with protein 3CD. The cofactor is Mg(2+). Post-translationally, specific enzymatic cleavages in vivo by the viral proteases yield processing intermediates and the mature proteins. In terms of processing, myristoylation is required for the formation of pentamers during virus assembly. Further assembly of 12 pentamers and a molecule of genomic RNA generates the provirion. During virion maturation, immature virions are rendered infectious following cleavage of VP0 into VP4 and VP2. This maturation seems to be an autocatalytic event triggered by the presence of RNA in the capsid and it is followed by a conformational change infectious virion. Post-translationally, myristoylation is required during RNA encapsidation and formation of the mature virus particle. In terms of processing, VPg is uridylylated by the polymerase into VPg-pUpU. This acts as a nucleotide-peptide primer for the genomic RNA replication.

Its subcellular location is the virion. The protein resides in the host cytoplasm. It localises to the host cytoplasmic vesicle membrane. The protein localises to the host nucleus. It carries out the reaction a ribonucleoside 5'-triphosphate + H2O = a ribonucleoside 5'-diphosphate + phosphate + H(+). The catalysed reaction is Selective cleavage of Tyr-|-Gly bond in the picornavirus polyprotein.. It catalyses the reaction RNA(n) + a ribonucleoside 5'-triphosphate = RNA(n+1) + diphosphate. The enzyme catalyses Selective cleavage of Gln-|-Gly bond in the poliovirus polyprotein. In other picornavirus reactions Glu may be substituted for Gln, and Ser or Thr for Gly.. With respect to regulation, replication or transcription is subject to high level of random mutations by the nucleotide analog ribavirin. In terms of biological role, forms an icosahedral capsid of pseudo T=3 symmetry with capsid proteins VP2 and VP3. The capsid is 300 Angstroms in diameter, composed of 60 copies of each capsid protein and enclosing the viral positive strand RNA genome. Capsid protein VP1 mainly forms the vertices of the capsid. Capsid protein VP1 interacts with host cell receptor to provide virion attachment to target host cells. This attachment induces virion internalization. Tyrosine kinases are probably involved in the entry process. After binding to its receptor, the capsid undergoes conformational changes. Capsid protein VP1 N-terminus (that contains an amphipathic alpha-helix) and capsid protein VP4 are externalized. Together, they shape a pore in the host membrane through which viral genome is translocated to host cell cytoplasm. Its function is as follows. Forms an icosahedral capsid of pseudo T=3 symmetry with capsid proteins VP2 and VP3. The capsid is 300 Angstroms in diameter, composed of 60 copies of each capsid protein and enclosing the viral positive strand RNA genome. Functionally, lies on the inner surface of the capsid shell. After binding to the host receptor, the capsid undergoes conformational changes. Capsid protein VP4 is released, Capsid protein VP1 N-terminus is externalized, and together, they shape a pore in the host membrane through which the viral genome is translocated into the host cell cytoplasm. Component of immature procapsids, which is cleaved into capsid proteins VP4 and VP2 after maturation. Allows the capsid to remain inactive before the maturation step. In terms of biological role, cysteine protease that cleaves viral polyprotein and specific host proteins. It is responsible for the autocatalytic cleavage between the P1 and P2 regions, which is the first cleavage occurring in the polyprotein. Also cleaves the host translation initiation factor EIF4G1, in order to shut down the capped cellular mRNA translation. Inhibits the host nucleus-cytoplasm protein and RNA trafficking by cleaving host members of the nuclear pores. Counteracts stress granule formation probably by antagonizing its assembly or promoting its dissassembly. Its function is as follows. Plays an essential role in the virus replication cycle by acting as a viroporin. Creates a pore in the host endoplasmic reticulum and as a consequence releases Ca2+ in the cytoplasm of infected cell. In turn, high levels of cytoplasmic calcium may trigger membrane trafficking and transport of viral ER-associated proteins to viroplasms, sites of viral genome replication. Functionally, induces and associates with structural rearrangements of intracellular membranes. Displays RNA-binding, nucleotide binding and NTPase activities. May play a role in virion morphogenesis and viral RNA encapsidation by interacting with the capsid protein VP3. Localizes the viral replication complex to the surface of membranous vesicles. Together with protein 3CD binds the Cis-Active RNA Element (CRE) which is involved in RNA synthesis initiation. Acts as a cofactor to stimulate the activity of 3D polymerase, maybe through a nucleid acid chaperone activity. In terms of biological role, localizes the viral replication complex to the surface of membranous vesicles. It inhibits host cell endoplasmic reticulum-to-Golgi apparatus transport and causes the disassembly of the Golgi complex, possibly through GBF1 interaction. This would result in depletion of MHC, trail receptors and IFN receptors at the host cell surface. Plays an essential role in viral RNA replication by recruiting ACBD3 and PI4KB at the viral replication sites, thereby allowing the formation of the rearranged membranous structures where viral replication takes place. Its function is as follows. Acts as a primer for viral RNA replication and remains covalently bound to viral genomic RNA. VPg is uridylylated prior to priming replication into VPg-pUpU. The oriI viral genomic sequence may act as a template for this. The VPg-pUpU is then used as primer on the genomic RNA poly(A) by the RNA-dependent RNA polymerase to replicate the viral genome. During genome replication, the VPg-RNA linkage is removed by the host TDP2, thereby accelerating replication. During the late stage of the replication cycle, host TDP2 is excluded from sites of viral RNA synthesis and encapsidation, allowing for the generation of progeny virions. Functionally, involved in the viral replication complex and viral polypeptide maturation. It exhibits protease activity with a specificity and catalytic efficiency that is different from protease 3C. Protein 3CD lacks polymerase activity. The 3C domain in the context of protein 3CD may have an RNA binding activity. Protein 3CD binds to the 5'UTR of the viral genome. Replicates the viral genomic RNA on the surface of intracellular membranes. May form linear arrays of subunits that propagate along a strong head-to-tail interaction called interface-I. Covalently attaches UMP to a tyrosine of VPg, which is used to prime RNA synthesis. The positive stranded RNA genome is first replicated at virus induced membranous vesicles, creating a dsRNA genomic replication form. This dsRNA is then used as template to synthesize positive stranded RNA genomes. ss(+)RNA genomes are either translated, replicated or encapsidated. In terms of biological role, major viral protease that mediates proteolytic processing of the polyprotein. Cleaves host EIF5B, contributing to host translation shutoff. Also cleaves host PABPC1, contributing to host translation shutoff. Cleaves host NLRP1, triggers host N-glycine-mediated degradation of the autoinhibitory NLRP1 N-terminal fragment. The sequence is that of Genome polyprotein from Echovirus 11 (strain Gregory).